An 894-amino-acid chain; its full sequence is Valine--tRNA ligase (894 aa).

The short motif at 48 to 58 (PNVTGFLHMGH) is the 'HIGH' region element. The short motif at 527–531 (KMSKS) is the 'KMSKS' region element. Lys-530 serves as a coordination point for ATP. A coiled-coil region spans residues 827–852 (LVDFDEEVKRINKSIEKLTRDIGMLS).

This sequence belongs to the class-I aminoacyl-tRNA synthetase family. ValS type 1 subfamily. As to quaternary structure, monomer.

It localises to the cytoplasm. The catalysed reaction is tRNA(Val) + L-valine + ATP = L-valyl-tRNA(Val) + AMP + diphosphate. Its function is as follows. Catalyzes the attachment of valine to tRNA(Val). As ValRS can inadvertently accommodate and process structurally similar amino acids such as threonine, to avoid such errors, it has a 'posttransfer' editing activity that hydrolyzes mischarged Thr-tRNA(Val) in a tRNA-dependent manner. The polypeptide is Valine--tRNA ligase (Bdellovibrio bacteriovorus (strain ATCC 15356 / DSM 50701 / NCIMB 9529 / HD100)).